The primary structure comprises 153 residues: UPF0756 membrane protein LCA_1031 (153 aa).

A run of 4 helical transmembrane segments spans residues 4–24 (WLFLAAILIVALLAKNQSLII), 52–72 (WGVTVISVAILVPIATGQIGF), 85–105 (FIAVGCGVLVAVLSAKGVGLL), and 115–135 (LVFGTIMGVVFLKGIAAGPVI).

The protein belongs to the UPF0756 family.

Its subcellular location is the cell membrane. This chain is UPF0756 membrane protein LCA_1031, found in Latilactobacillus sakei subsp. sakei (strain 23K) (Lactobacillus sakei subsp. sakei).